Reading from the N-terminus, the 637-residue chain is MGKTIRLTTAQALIQFLNRQYIHVDGKEEPFVEGIFTIFGHGNVLGIGQALEQDAGHLKVYQGKNEQGMAHAAMAYSKQMLRRKIYAVSTSVGPGAANLTAAAGTALANHIPVLLLPADTFATRQPDPVLQQVEQEYSAAVTTNDALKPVSRYWDRITRPEQLMSSLIRAFEVMTDPAKAGPATICISQDVEGEAFDFDESFFEKRVHYIDRMQPSERELKGAAERIKQSSRPVILVGGGAKYSGAREELIALSETYGIPLVETQAGKSTVEADFANNLGGMGITGTLAANKAARQADLIIGVGTRYTDFATSSKTAFDFDKAKFLNINVSRMQAYKLDAFQVVADAKVTLGRLHGLLDGYKSAFGTAIKDWKDEWQAERDRLGKVTFTRDAFEPEIKNHFSQDVLNEYADALGTELPQTTALLTINDTIPEDSVVISSAGSLPGDLQRLWHSNVPNTYHLEYGYSCMGYEVSGTLGLKLAHPDKEVYSLVGDGSFLMLHSELITALQYNKKINVLLFDNSGFGCINNLQMDHGSGSYFCEFRTEDNQILNVDYAKVAEGYGAKTYRANTVEELKAALEDAKTQDVSTLIEMKVLPKTMTDGYDSWWHVGVAEVSEQKSVQRAYEAKETKLKSAKQY.

Thiamine diphosphate is bound at residue Glu66. The thiamine pyrophosphate binding stretch occupies residues 442–522 (SLPGDLQRLW…INVLLFDNSG (81 aa)). Residues Asp493 and Asn520 each contribute to the Mg(2+) site.

This sequence belongs to the TPP enzyme family. It depends on Mg(2+) as a cofactor. Thiamine diphosphate is required as a cofactor.

It carries out the reaction 3D-3,5/4-trihydroxycyclohexane-1,2-dione + H2O = 5-deoxy-D-glucuronate + H(+). Its pathway is polyol metabolism; myo-inositol degradation into acetyl-CoA; acetyl-CoA from myo-inositol: step 3/7. Its function is as follows. Involved in the cleavage of the C1-C2 bond of 3D-(3,5/4)-trihydroxycyclohexane-1,2-dione (THcHDO) to yield 5-deoxy-glucuronate (5DG). The sequence is that of 3D-(3,5/4)-trihydroxycyclohexane-1,2-dione hydrolase from Bacillus velezensis (strain DSM 23117 / BGSC 10A6 / LMG 26770 / FZB42) (Bacillus amyloliquefaciens subsp. plantarum).